Reading from the N-terminus, the 342-residue chain is L-threonine 3-dehydrogenase (342 aa).

Residue Cys39 participates in Zn(2+) binding. Active-site charge relay system residues include Thr41 and His44. Zn(2+)-binding residues include His64, Glu65, Cys94, Cys97, Cys100, and Cys108. NAD(+) is bound by residues Ile176, Asp196, Arg201, 263-265 (LGI), and 287-288 (IY).

Belongs to the zinc-containing alcohol dehydrogenase family. Homotetramer. Zn(2+) serves as cofactor.

It is found in the cytoplasm. It carries out the reaction L-threonine + NAD(+) = (2S)-2-amino-3-oxobutanoate + NADH + H(+). It participates in amino-acid degradation; L-threonine degradation via oxydo-reductase pathway; glycine from L-threonine: step 1/2. Its function is as follows. Catalyzes the NAD(+)-dependent oxidation of L-threonine to 2-amino-3-ketobutyrate. The protein is L-threonine 3-dehydrogenase of Protochlamydia amoebophila (strain UWE25).